Reading from the N-terminus, the 30-residue chain is Putative alpha-amylase inhibitor (30 aa).

The protein belongs to the leguminous lectin family.

Its function is as follows. Lectin and alpha-amylase inhibitor. Acts as a defensive protein against insects. This is Putative alpha-amylase inhibitor from Phaseolus vulgaris (Kidney bean).